A 539-amino-acid polypeptide reads, in one-letter code: MGTEGPPPPAASRGRQGCLLVPARTKTTIALLYDEESENAYDIRLKLTKEVLTIQKQDVVCVGGSHQGRNRRTVTLRRQPVGGLGLSIKGGSEHNVPVVISKIFEDQAADQTGMLFVGDAVLQVNGIHVENATHEEVVHLLRNAGDEVTITVEYLREAPAFLKLPLGSPGPSSDHSSGASSPLFDSGLHLNGNSSTTAPSSPSSPIAKDPRYEKRWLDTLSVPLSMARISRYKAGTEKLRWNAFEVLALDGVSSGILRFYTAQDGTDWLRAVSANIRELTLQNMKMANKCCSPSDQVVHMGWVNEKLQGADSSQTFRPKFLALKGPSFYVFSTPPVSTFDWVRAERTYHLCEVLFKVHKFWLTEDCWLQANLYLGLQDFDFEDQRPYCFSIVAGHGKSHVFNVELGSELAMWEKSFQRATFMEVQRTGSRTYMCSWQGEMLCFTVDFALGFTCFESKTKNVLWRFKFSQLKGSSDDGKTRVKLLFQNLDTKQIETKELEFQDLRAVLHCIHSFIAAKVASVDPGFMDSQSLARKYMYSS.

The 84-residue stretch at 73 to 156 (TVTLRRQPVG…EVTITVEYLR (84 aa)) folds into the PDZ domain. Composition is skewed to low complexity over residues 168-183 (SPGP…SSPL) and 194-205 (SSTTAPSSPSSP). The tract at residues 168-209 (SPGPSSDHSSGASSPLFDSGLHLNGNSSTTAPSSPSSPIAKD) is disordered. In terms of domain architecture, PH spans 296–421 (QVVHMGWVNE…WEKSFQRATF (126 aa)).

It belongs to the syntrophin family. In terms of assembly, interacts with the dystrophin protein DMD and related proteins DTNA and DTNB. In terms of tissue distribution, widely expressed. Strong expression in brain and testis. In CNS, it is expressed in the perikaryon and proximal portion of the neuronal processes. Strong expression in the hippocampus, neuron-rich dendate granule cells, and pyramidal cell layers. Highly expressed in neurons of the cerebral cortex. Also expressed in the cerebellar cortex, deep cerebellar nuclei, thalamus, and basal ganglia.

Its subcellular location is the cell membrane. It localises to the sarcolemma. The protein localises to the cytoplasm. The protein resides in the cytoskeleton. In terms of biological role, adapter protein that binds to and probably organizes the subcellular localization of a variety of proteins. May link various receptors to the actin cytoskeleton and the dystrophin glycoprotein complex. The chain is Gamma-2-syntrophin (SNTG2) from Homo sapiens (Human).